The sequence spans 340 residues: Biotin synthase (340 aa).

Residues 1-21 (MDAASVSFGSGHDLSSQPRHD) are disordered. Positions 53-272 (NHVETANLLS…IAVARIMMPR (220 aa)) constitute a Radical SAM core domain. Residues cysteine 68, cysteine 72, and cysteine 75 each contribute to the [4Fe-4S] cluster site. Positions 112, 143, 203, and 276 each coordinate [2Fe-2S] cluster.

This sequence belongs to the radical SAM superfamily. Biotin synthase family. As to quaternary structure, homodimer. It depends on [4Fe-4S] cluster as a cofactor. The cofactor is [2Fe-2S] cluster.

It carries out the reaction (4R,5S)-dethiobiotin + (sulfur carrier)-SH + 2 reduced [2Fe-2S]-[ferredoxin] + 2 S-adenosyl-L-methionine = (sulfur carrier)-H + biotin + 2 5'-deoxyadenosine + 2 L-methionine + 2 oxidized [2Fe-2S]-[ferredoxin]. The protein operates within cofactor biosynthesis; biotin biosynthesis; biotin from 7,8-diaminononanoate: step 2/2. In terms of biological role, catalyzes the conversion of dethiobiotin (DTB) to biotin by the insertion of a sulfur atom into dethiobiotin via a radical-based mechanism. The chain is Biotin synthase from Nitrobacter hamburgensis (strain DSM 10229 / NCIMB 13809 / X14).